A 1098-amino-acid polypeptide reads, in one-letter code: PAN2-PAN3 deadenylation complex catalytic subunit PAN2 (1098 aa).

4 WD repeats span residues 19-58 (ASKD…PFQL), 150-190 (TGFD…SVKS), 253-293 (PFPN…KLNV), and 300-338 (PASP…NFVN). Residues 340–466 (PAPLEEQDIP…SIFHLKSPTS (127 aa)) are linker. Residues 417–442 (RNISQPYQSLREPPGSNSNAPRFISE) are disordered. The 374-residue stretch at 466 to 839 (SVPHCYSRLQ…KPVIIVYSEP (374 aa)) folds into the USP domain. In terms of domain architecture, Exonuclease spans 894 to 1067 (IAIDAEFVVS…EDAYTALMLF (174 aa)). The a divalent metal cation site is built by Asp897, Glu899, Asp1006, and Asp1059.

The protein belongs to the peptidase C19 family. PAN2 subfamily. In terms of assembly, forms a heterotrimer with an asymmetric homodimer of the regulatory subunit PAN3 to form the poly(A)-nuclease (PAN) deadenylation complex. A divalent metal cation is required as a cofactor.

It is found in the cytoplasm. The catalysed reaction is Exonucleolytic cleavage of poly(A) to 5'-AMP.. Positively regulated by the regulatory subunit PAN3. In terms of biological role, catalytic subunit of the poly(A)-nuclease (PAN) deadenylation complex, one of two cytoplasmic mRNA deadenylases involved in mRNA turnover. PAN specifically shortens poly(A) tails of RNA and the activity is stimulated by poly(A)-binding protein PAB1. PAN deadenylation is followed by rapid degradation of the shortened mRNA tails by the CCR4-NOT complex. Deadenylated mRNAs are then degraded by two alternative mechanisms, namely exosome-mediated 3'-5' exonucleolytic degradation, or deadenylation-dependent mRNA decaping and subsequent 5'-3' exonucleolytic degradation by XRN1. May also be involved in post-transcriptional maturation of mRNA poly(A) tails. This Meyerozyma guilliermondii (strain ATCC 6260 / CBS 566 / DSM 6381 / JCM 1539 / NBRC 10279 / NRRL Y-324) (Yeast) protein is PAN2-PAN3 deadenylation complex catalytic subunit PAN2.